Reading from the N-terminus, the 336-residue chain is UbiA prenyltransferase domain-containing protein 1 (336 aa).

Residues 1 to 22 (MQEMKPAALSGSNGLNGASGSS) are disordered. The span at 7–22 (AALSGSNGLNGASGSS) shows a compositional bias: low complexity. 7 helical membrane passes run 79–99 (LLLL…GNLV), 129–149 (VVMF…LLYF), 158–178 (LALI…GIGL), 180–200 (YVAL…VMFA), 201–221 (HAVQ…PLAL), 254–274 (LSYV…CILA), and 315–335 (LLMG…SLPL).

Belongs to the UbiA prenyltransferase family.

It localises to the endoplasmic reticulum membrane. Its subcellular location is the golgi apparatus membrane. It is found in the mitochondrion membrane. It catalyses the reaction menadiol + (2E,6E,10E)-geranylgeranyl diphosphate = menaquinol-4 + diphosphate. It carries out the reaction all-trans-decaprenyl diphosphate + 4-hydroxybenzoate = 4-hydroxy-3-(all-trans-decaprenyl)benzoate + diphosphate. Its pathway is quinol/quinone metabolism; menaquinone biosynthesis. It functions in the pathway cofactor biosynthesis; ubiquinone biosynthesis. Prenyltransferase that mediates the formation of menaquinone-4 (MK-4) and coenzyme Q10. MK-4 is a vitamin K2 isoform required for endothelial cell development. Mediates the conversion of phylloquinone (PK) into MK-4, probably by cleaving the side chain of phylloquinone (PK) to release 2-methyl-1,4-naphthoquinone (menadione; K3) and then prenylating it with geranylgeranyl pyrophosphate (GGPP) to form MK-4. Also plays a role in cardiovascular development independently of MK-4 biosynthesis, by acting as a coenzyme Q10 biosynthetic enzyme: coenzyme Q10, also named ubiquinone, plays an important antioxidant role in the cardiovascular system. Mediates biosynthesis of coenzyme Q10 in the Golgi membrane, leading to protect cardiovascular tissues from nos3/eNOS-dependent oxidative stress. This chain is UbiA prenyltransferase domain-containing protein 1 (ubiad1), found in Danio rerio (Zebrafish).